We begin with the raw amino-acid sequence, 111 residues long: UPF0060 membrane protein Cbei_2176 (111 aa).

4 consecutive transmembrane segments (helical) span residues 7 to 27, 33 to 53, 60 to 80, and 85 to 105; these read ILYF…IWIW, SYLY…IPTL, FGKV…LWGW, and IVPD…VIVI.

This sequence belongs to the UPF0060 family.

The protein resides in the cell membrane. The polypeptide is UPF0060 membrane protein Cbei_2176 (Clostridium beijerinckii (strain ATCC 51743 / NCIMB 8052) (Clostridium acetobutylicum)).